A 92-amino-acid chain; its full sequence is MALLAGSLLGPTSRSAALLGGRWLQPRAWLGFPDAWGLPTPQQARGKSRGNEYQPSNIKRKNKHGWVRRLSTPAGVQVILRRMLKGRKSLSH.

The N-terminal 46 residues, 1–46 (MALLAGSLLGPTSRSAALLGGRWLQPRAWLGFPDAWGLPTPQQARG), are a transit peptide targeting the mitochondrion. Over residues 40-57 (TPQQARGKSRGNEYQPSN) the composition is skewed to polar residues. The segment at 40–63 (TPQQARGKSRGNEYQPSNIKRKNK) is disordered. Phosphoserine is present on Ser71.

Belongs to the bacterial ribosomal protein bL34 family. In terms of assembly, component of the mitochondrial ribosome large subunit (39S) which comprises a 16S rRNA and about 50 distinct proteins.

The protein localises to the mitochondrion. This is Large ribosomal subunit protein bL34m (MRPL34) from Macaca fascicularis (Crab-eating macaque).